We begin with the raw amino-acid sequence, 88 residues long: Small ribosomal subunit protein bS16c (88 aa).

It belongs to the bacterial ribosomal protein bS16 family.

The protein resides in the plastid. It localises to the chloroplast. In Sinapis alba (White mustard), this protein is Small ribosomal subunit protein bS16c.